A 367-amino-acid polypeptide reads, in one-letter code: MSETKTNLLDLDRDAMRAFFVELGEKPFRADQVMKWIYHFGCDDFDQMNNVNKVLRERLKAIAEIRAPEVSREQRSSDGTIKWALQVGGQEVETVYIPEEDRATLCVSSQVGCALECKFCSTAQQGFNRNLKVSEIIGQVWRAAKIVGGKRPITNVVMMGMGEPLLNLANVVPAMRLMMDDFGYGISKRRVTISTSGVVPALDMLGDQIDVALAISLHAPNDKLRSEIMPINDKYNIEEFLAGVRRYLGKSNANGGRVTVEYVLLDHINDDMQHAHELAKVLKDTPSKINLIPFNPFPGNPYGKPSNSRIDRFSKVLMEYGFTVIVRKTRGDDIDAACGQLVGEVIDRTKRTMKNRMQQDGISVKMV.

The Proton acceptor role is filled by E93. The Radical SAM core domain occupies 99 to 333 (EEDRATLCVS…VIVRKTRGDD (235 aa)). C106 and C338 form a disulfide bridge. The [4Fe-4S] cluster site is built by C113, C117, and C120. S-adenosyl-L-methionine contacts are provided by residues 162-163 (GE), S194, 216-218 (SLH), and N295. C338 acts as the S-methylcysteine intermediate in catalysis.

This sequence belongs to the radical SAM superfamily. RlmN family. The cofactor is [4Fe-4S] cluster.

Its subcellular location is the cytoplasm. The catalysed reaction is adenosine(2503) in 23S rRNA + 2 reduced [2Fe-2S]-[ferredoxin] + 2 S-adenosyl-L-methionine = 2-methyladenosine(2503) in 23S rRNA + 5'-deoxyadenosine + L-methionine + 2 oxidized [2Fe-2S]-[ferredoxin] + S-adenosyl-L-homocysteine. It carries out the reaction adenosine(37) in tRNA + 2 reduced [2Fe-2S]-[ferredoxin] + 2 S-adenosyl-L-methionine = 2-methyladenosine(37) in tRNA + 5'-deoxyadenosine + L-methionine + 2 oxidized [2Fe-2S]-[ferredoxin] + S-adenosyl-L-homocysteine. Specifically methylates position 2 of adenine 2503 in 23S rRNA and position 2 of adenine 37 in tRNAs. m2A2503 modification seems to play a crucial role in the proofreading step occurring at the peptidyl transferase center and thus would serve to optimize ribosomal fidelity. This Aeromonas hydrophila subsp. hydrophila (strain ATCC 7966 / DSM 30187 / BCRC 13018 / CCUG 14551 / JCM 1027 / KCTC 2358 / NCIMB 9240 / NCTC 8049) protein is Dual-specificity RNA methyltransferase RlmN.